Here is a 327-residue protein sequence, read N- to C-terminus: Undecaprenyl-phosphate 4-deoxy-4-formamido-L-arabinose transferase (327 aa).

The Cytoplasmic portion of the chain corresponds to M1 to L235. The helical transmembrane segment at L236 to V256 threads the bilayer. The Periplasmic segment spans residues L257–G269. Residues V270–L290 traverse the membrane as a helical segment. The Cytoplasmic segment spans residues L291–Q327.

The protein belongs to the glycosyltransferase 2 family.

The protein localises to the cell inner membrane. The catalysed reaction is UDP-4-deoxy-4-formamido-beta-L-arabinose + di-trans,octa-cis-undecaprenyl phosphate = 4-deoxy-4-formamido-alpha-L-arabinopyranosyl di-trans,octa-cis-undecaprenyl phosphate + UDP. Its pathway is glycolipid biosynthesis; 4-amino-4-deoxy-alpha-L-arabinose undecaprenyl phosphate biosynthesis; 4-amino-4-deoxy-alpha-L-arabinose undecaprenyl phosphate from UDP-4-deoxy-4-formamido-beta-L-arabinose and undecaprenyl phosphate: step 1/2. The protein operates within bacterial outer membrane biogenesis; lipopolysaccharide biosynthesis. In terms of biological role, catalyzes the transfer of 4-deoxy-4-formamido-L-arabinose from UDP to undecaprenyl phosphate. The modified arabinose is attached to lipid A and is required for resistance to polymyxin and cationic antimicrobial peptides. In Salmonella agona (strain SL483), this protein is Undecaprenyl-phosphate 4-deoxy-4-formamido-L-arabinose transferase.